Consider the following 109-residue polypeptide: Putative ankyrin repeat protein L482 (109 aa).

4 ANK repeats span residues tyrosine 1–threonine 26, asparagine 27–serine 56, glutamate 57–serine 86, and asparagine 88–alanine 109.

This is Putative ankyrin repeat protein L482 from Acanthamoeba polyphaga (Amoeba).